The following is a 586-amino-acid chain: Methionine--tRNA ligase, mitochondrial (586 aa).

The N-terminal 46 residues, Met-1 to Tyr-46, are a transit peptide targeting the mitochondrion. The 'HIGH' region motif lies at Phe-45–His-55. Residues Lys-340–Ser-344 carry the 'KMSKS' region motif. Lys-343 lines the ATP pocket.

Belongs to the class-I aminoacyl-tRNA synthetase family.

It is found in the mitochondrion matrix. The catalysed reaction is tRNA(Met) + L-methionine + ATP = L-methionyl-tRNA(Met) + AMP + diphosphate. The sequence is that of Methionine--tRNA ligase, mitochondrial (Mars2) from Mus musculus (Mouse).